The sequence spans 210 residues: MSTIEAEKPRTEVSPRLKLVLELGPLMVFFFANSRGDWLASRFPVLAELGGPIFIATGLFMAATATALIVSWIMTRTLPMMPLISGIVVFVFGALTLWLQNDTFIKMKPTIVNTLFGAILLGGLLFGKSLLGYVFHAAFKLDEDGWRKLTIRWGVFFLFLAVLNEIVWRSFSTDFWVAFKVWGTMPITILFTLAQMPLIMKHSQERESAE.

Helical transmembrane passes span 19 to 39, 53 to 73, 78 to 98, 115 to 135, 148 to 168, and 175 to 195; these read LVLE…GDWL, IFIA…VSWI, LPMM…LTLW, LFGA…GYVF, KLTI…EIVW, and FWVA…TLAQ.

This sequence belongs to the YciB family.

It is found in the cell inner membrane. Functionally, plays a role in cell envelope biogenesis, maintenance of cell envelope integrity and membrane homeostasis. The chain is Inner membrane-spanning protein YciB from Sinorhizobium fredii (strain NBRC 101917 / NGR234).